Here is a 446-residue protein sequence, read N- to C-terminus: Solute carrier family 52, riboflavin transporter, member 2 (446 aa).

The next 4 membrane-spanning stretches (helical) occupy residues 14–34, 47–67, 79–99, and 104–124; these read LLVA…WVEL, LPSY…VVTL, APIQ…APLW, and VMAG…LALA. An N-linked (GlcNAc...) asparagine glycan is attached at N129. 2 helical membrane passes run 147–167 and 196–216; these read FFLG…GQGV and FFGA…GLLL. The segment at 228-267 is disordered; the sequence is GSGTGLRGGAPGVEEEEEEEASPLQEPPSQAAGNTPSPDP. The segment covering 229-238 has biased composition (gly residues); the sequence is SGTGLRGGAP. A compositionally biased stretch (polar residues) spans 254–263; that stretch reads PPSQAAGNTP. 5 consecutive transmembrane segments (helical) span residues 278-298, 313-333, 340-360, 367-387, and 405-425; these read ACLL…LPAV, LAVV…MGIL, LGGL…LAIL, VGTS…LGVF, and ALLA…VTMF.

It belongs to the riboflavin transporter family.

Its subcellular location is the cell membrane. The catalysed reaction is riboflavin(in) = riboflavin(out). With respect to regulation, riboflavin transport is Na(+)-independent but moderately pH-sensitive. Activity is strongly inhibited by riboflavin analogs, such as lumiflavin. Weakly inhibited by flavin adenine dinucleotide (FAD) and flavin mononucleotide (FMN). In terms of biological role, plasma membrane transporter mediating the uptake by cells of the water soluble vitamin B2/riboflavin that plays a key role in biochemical oxidation-reduction reactions of the carbohydrate, lipid, and amino acid metabolism. May also act as a receptor for 4-hydroxybutyrate. (Microbial infection) In case of infection by porcine endogenous retrovirus (PERV-A), acts as a cell receptor to retroviral envelopes. The polypeptide is Solute carrier family 52, riboflavin transporter, member 2 (SLC52A2) (Sus scrofa (Pig)).